Reading from the N-terminus, the 164-residue chain is UPF0114 protein KPK_0696 (164 aa).

The next 4 helical transmembrane spans lie at 15-35, 53-73, 109-126, and 136-156; these read LLAPVYFGLSLGLVALTIKFF, LILTLLSLVDMTLVGGLLVMV, VAASIVAISSIHLLRVFM, and LMWYVIIHLTFVLSAFVMGYL.

It belongs to the UPF0114 family.

It is found in the cell membrane. The sequence is that of UPF0114 protein KPK_0696 from Klebsiella pneumoniae (strain 342).